We begin with the raw amino-acid sequence, 136 residues long: Piercer of microtubule wall 1 protein (136 aa).

The segment covering 1–16 (MSEEDPKACAEPEEPK) has biased composition (basic and acidic residues). The disordered stretch occupies residues 1 to 27 (MSEEDPKACAEPEEPKAGPPPEKTSDW).

Belongs to the PIERCE1 family. In terms of assembly, microtubule inner protein component of sperm flagellar doublet microtubules. Interacts with CFAP53, ODAD1 and ODAD3; the interactions link the outer dynein arms docking complex (ODA-DC) to the internal microtubule inner proteins (MIP) in cilium axoneme. Expressed in trachea multiciliated cells.

It is found in the cytoplasm. Its subcellular location is the cytoskeleton. It localises to the cilium axoneme. The protein resides in the flagellum axoneme. Its function is as follows. Microtubule inner protein involved in the attachment of outer dynein arms (ODAs) to dynein-decorated doublet microtubules (DMTs) in cilia axoneme, which is required for motile cilia beating. Functions at the initial step of left-right asymmetry specification of the visceral organs. The sequence is that of Piercer of microtubule wall 1 protein (PIERCE1) from Bos taurus (Bovine).